The sequence spans 249 residues: Triosephosphate isomerase (249 aa).

9–11 lines the substrate pocket; the sequence is NWK. The Electrophile role is filled by histidine 94. Catalysis depends on glutamate 166, which acts as the Proton acceptor. Substrate is bound by residues glycine 172, serine 211, and 232–233; that span reads GG.

It belongs to the triosephosphate isomerase family. In terms of assembly, homodimer.

It is found in the cytoplasm. The enzyme catalyses D-glyceraldehyde 3-phosphate = dihydroxyacetone phosphate. It functions in the pathway carbohydrate biosynthesis; gluconeogenesis. It participates in carbohydrate degradation; glycolysis; D-glyceraldehyde 3-phosphate from glycerone phosphate: step 1/1. Involved in the gluconeogenesis. Catalyzes stereospecifically the conversion of dihydroxyacetone phosphate (DHAP) to D-glyceraldehyde-3-phosphate (G3P). The protein is Triosephosphate isomerase of Moorella thermoacetica (strain ATCC 39073 / JCM 9320).